A 159-amino-acid polypeptide reads, in one-letter code: Ribosomal RNA large subunit methyltransferase H (159 aa).

Residues Leu76, Gly108, and 127-132 (FGRLTL) each bind S-adenosyl-L-methionine.

The protein belongs to the RNA methyltransferase RlmH family. Homodimer.

It is found in the cytoplasm. The enzyme catalyses pseudouridine(1915) in 23S rRNA + S-adenosyl-L-methionine = N(3)-methylpseudouridine(1915) in 23S rRNA + S-adenosyl-L-homocysteine + H(+). In terms of biological role, specifically methylates the pseudouridine at position 1915 (m3Psi1915) in 23S rRNA. The chain is Ribosomal RNA large subunit methyltransferase H from Listeria monocytogenes serotype 4a (strain HCC23).